We begin with the raw amino-acid sequence, 183 residues long: Large ribosomal subunit protein bL27m (183 aa).

The N-terminal 34 residues, 1–34, are a transit peptide targeting the mitochondrion; that stretch reads MFLRPTSIPSAVSQIRAQLFAGPSSLASQIQVRW.

The protein belongs to the bacterial ribosomal protein bL27 family.

Its subcellular location is the mitochondrion. This Cryptococcus neoformans var. neoformans serotype D (strain B-3501A) (Filobasidiella neoformans) protein is Large ribosomal subunit protein bL27m (RPL27).